We begin with the raw amino-acid sequence, 171 residues long: MPVFGLAALKLNWEALSTPKFRVTFAQWVCSLLMWSLMASYSKHGEFKFVVVFGLVMWGLASTYLVYQLLNGPPLAPIVEFWANVAAGSLAFICLVLASATCNRAVGEPQTKVCSGELKPKASAAFAFLLLCAYGGLAYLSWRTWRNPPTIASYALHDDPEFAQPLHSSHK.

The Cytoplasmic portion of the chain corresponds to 1–22 (MPVFGLAALKLNWEALSTPKFR). A helical transmembrane segment spans residues 23 to 42 (VTFAQWVCSLLMWSLMASYS). Residues 43-48 (KHGEFK) are Extracellular-facing. The helical transmembrane segment at 49 to 69 (FVVVFGLVMWGLASTYLVYQL) threads the bilayer. Topologically, residues 70–77 (LNGPPLAP) are cytoplasmic. Residues 78 to 98 (IVEFWANVAAGSLAFICLVLA) traverse the membrane as a helical segment. Over 99–121 (SATCNRAVGEPQTKVCSGELKPK) the chain is Extracellular. A helical transmembrane segment spans residues 122–142 (ASAAFAFLLLCAYGGLAYLSW). The Cytoplasmic portion of the chain corresponds to 143 to 171 (RTWRNPPTIASYALHDDPEFAQPLHSSHK).

Belongs to the Casparian strip membrane proteins (CASP) family. Homodimer and heterodimers.

The protein localises to the cell membrane. The protein is CASP-like protein 0U2 of Chlorokybus atmophyticus (Soil alga).